The chain runs to 144 residues: Urease subunit beta (144 aa).

Belongs to the urease beta subunit family. As to quaternary structure, heterotrimer of UreA (gamma), UreB (beta) and UreC (alpha) subunits. Three heterotrimers associate to form the active enzyme.

Its subcellular location is the cytoplasm. The enzyme catalyses urea + 2 H2O + H(+) = hydrogencarbonate + 2 NH4(+). Its pathway is nitrogen metabolism; urea degradation; CO(2) and NH(3) from urea (urease route): step 1/1. The protein is Urease subunit beta of Yersinia pseudotuberculosis serotype O:1b (strain IP 31758).